The following is a 290-amino-acid chain: Pyridoxal kinase PdxY (290 aa).

Substrate contacts are provided by residues Ser-12 and 47–48 (TQ). ATP-binding positions include Asp-114, Glu-151, Lys-184, and 211–214 (RPLL). Position 225 (Asp-225) interacts with substrate.

It belongs to the pyridoxine kinase family. PdxY subfamily. In terms of assembly, homodimer. It depends on Mg(2+) as a cofactor.

The catalysed reaction is pyridoxal + ATP = pyridoxal 5'-phosphate + ADP + H(+). It functions in the pathway cofactor metabolism; pyridoxal 5'-phosphate salvage; pyridoxal 5'-phosphate from pyridoxal: step 1/1. In terms of biological role, pyridoxal kinase involved in the salvage pathway of pyridoxal 5'-phosphate (PLP). Catalyzes the phosphorylation of pyridoxal to PLP. The protein is Pyridoxal kinase PdxY of Pseudomonas putida (strain GB-1).